Consider the following 190-residue polypeptide: Remorin (190 aa).

Residues Met-1–Val-12 show a composition bias toward basic and acidic residues. Disordered stretches follow at residues Met-1 to Lys-45 and Val-50 to Arg-69. The residue at position 14 (Ser-14) is a Phosphoserine. Thr-58 is subject to Phosphothreonine. The stretch at Glu-92–Ile-147 forms a coiled coil.

Belongs to the remorin family. In terms of assembly, may polymerize to form filamentous structures. As to expression, expressed in roots, leaves, stems, flowers and siliques, with a maximal expression in apical regions.

Exhibits a non sequence-specific DNA-binding activity. This chain is Remorin (DBP), found in Arabidopsis thaliana (Mouse-ear cress).